Here is a 280-residue protein sequence, read N- to C-terminus: Polyamine aminopropyltransferase (280 aa).

The 234-residue stretch at 2–235 folds into the PABS domain; that stretch reads GGWIDEEHRG…GWWSWTFAAV (234 aa). Gln-29 is an S-methyl-5'-thioadenosine binding site. Spermidine-binding residues include His-60 and Asp-84. S-methyl-5'-thioadenosine is bound by residues Glu-104 and 136-137; that span reads DG. The Proton acceptor role is filled by Asp-155. Pro-162 is a binding site for S-methyl-5'-thioadenosine.

Belongs to the spermidine/spermine synthase family. In terms of assembly, homodimer or homotetramer.

The protein resides in the cytoplasm. It catalyses the reaction S-adenosyl 3-(methylsulfanyl)propylamine + putrescine = S-methyl-5'-thioadenosine + spermidine + H(+). It functions in the pathway amine and polyamine biosynthesis; spermidine biosynthesis; spermidine from putrescine: step 1/1. Its function is as follows. Catalyzes the irreversible transfer of a propylamine group from the amino donor S-adenosylmethioninamine (decarboxy-AdoMet) to putrescine (1,4-diaminobutane) to yield spermidine. The sequence is that of Polyamine aminopropyltransferase from Parasynechococcus marenigrum (strain WH8102).